Reading from the N-terminus, the 84-residue chain is Putative glutaredoxin MT3292 (84 aa).

One can recognise a Glutaredoxin domain in the interval 1-84 (MITAALTIYT…VKAKLVKIAG (84 aa)).

The protein is Putative glutaredoxin MT3292 of Mycobacterium tuberculosis (strain CDC 1551 / Oshkosh).